The primary structure comprises 309 residues: Putative S-adenosyl-L-methionine-dependent methyltransferase Mvan_0104 (309 aa).

S-adenosyl-L-methionine-binding positions include Asp-134 and 163–164 (DL).

Belongs to the UPF0677 family.

Its function is as follows. Exhibits S-adenosyl-L-methionine-dependent methyltransferase activity. This is Putative S-adenosyl-L-methionine-dependent methyltransferase Mvan_0104 from Mycolicibacterium vanbaalenii (strain DSM 7251 / JCM 13017 / BCRC 16820 / KCTC 9966 / NRRL B-24157 / PYR-1) (Mycobacterium vanbaalenii).